Consider the following 456-residue polypeptide: Enolase (456 aa).

Gln-164 provides a ligand contact to (2R)-2-phosphoglycerate. Glu-207 acts as the Proton donor in catalysis. Asp-244, Glu-287, and Asp-314 together coordinate Mg(2+). Positions 339, 368, 369, and 390 each coordinate (2R)-2-phosphoglycerate. The active-site Proton acceptor is Lys-339.

This sequence belongs to the enolase family. As to quaternary structure, component of the RNA degradosome, a multiprotein complex involved in RNA processing and mRNA degradation. Mg(2+) serves as cofactor.

The protein resides in the cytoplasm. The protein localises to the secreted. It is found in the cell surface. The catalysed reaction is (2R)-2-phosphoglycerate = phosphoenolpyruvate + H2O. It participates in carbohydrate degradation; glycolysis; pyruvate from D-glyceraldehyde 3-phosphate: step 4/5. In terms of biological role, catalyzes the reversible conversion of 2-phosphoglycerate (2-PG) into phosphoenolpyruvate (PEP). It is essential for the degradation of carbohydrates via glycolysis. The sequence is that of Enolase from Francisella tularensis subsp. holarctica (strain LVS).